A 270-amino-acid polypeptide reads, in one-letter code: FKBP-type peptidyl-prolyl cis-trans isomerase FkpA (270 aa).

The N-terminal stretch at 1-25 is a signal peptide; sequence MKSLFKVTLLATTMAVALHAPITFA. In terms of domain architecture, PPIase FKBP-type spans 164–249; the sequence is SDTVVVNYKG…VFDVELLDVK (86 aa).

Belongs to the FKBP-type PPIase family.

It is found in the periplasm. The enzyme catalyses [protein]-peptidylproline (omega=180) = [protein]-peptidylproline (omega=0). In terms of biological role, PPIases accelerate the folding of proteins. It catalyzes the cis-trans isomerization of proline imidic peptide bonds in oligopeptides. This chain is FKBP-type peptidyl-prolyl cis-trans isomerase FkpA (fkpA), found in Escherichia coli O157:H7.